Here is a 119-residue protein sequence, read N- to C-terminus: Large ribosomal subunit protein bL19 (119 aa).

It belongs to the bacterial ribosomal protein bL19 family.

Functionally, this protein is located at the 30S-50S ribosomal subunit interface and may play a role in the structure and function of the aminoacyl-tRNA binding site. The chain is Large ribosomal subunit protein bL19 from Limosilactobacillus reuteri (strain DSM 20016) (Lactobacillus reuteri).